The primary structure comprises 166 residues: Ribosome maturation factor RimM (166 aa).

The PRC barrel domain occupies 95 to 164 (EEEYYAYELV…KKIIVKEELL (70 aa)).

Belongs to the RimM family. In terms of assembly, binds ribosomal protein uS19.

Its subcellular location is the cytoplasm. In terms of biological role, an accessory protein needed during the final step in the assembly of 30S ribosomal subunit, possibly for assembly of the head region. Essential for efficient processing of 16S rRNA. May be needed both before and after RbfA during the maturation of 16S rRNA. It has affinity for free ribosomal 30S subunits but not for 70S ribosomes. The polypeptide is Ribosome maturation factor RimM (Aquifex aeolicus (strain VF5)).